A 903-amino-acid polypeptide reads, in one-letter code: Glutamate receptor ionotropic, NMDA 1 (903 aa).

The N-terminal stretch at 1 to 20 (MGTMRLFLLAVLFLFSFARA) is a signal peptide. Residues 21-557 (GCDPKIVNIG…TLDSFMQPFQ (537 aa)) are Extracellular-facing. N-linked (GlcNAc...) asparagine glycosylation is found at asparagine 61, asparagine 203, asparagine 276, asparagine 300, asparagine 350, asparagine 368, asparagine 440, asparagine 469, and asparagine 489. An intrachain disulfide couples cysteine 79 to cysteine 308. Cystine bridges form between cysteine 420-cysteine 452 and cysteine 436-cysteine 453. Residues proline 514, threonine 516, and arginine 521 each coordinate glycine. Residues 558 to 578 (STLWLLVGLSVHVVAVMLYLL) form a helical membrane-spanning segment. Over 579–600 (DRFSPFGRFKVNSEEEEEDALT) the chain is Cytoplasmic. Residues 601–620 (LSSAMWFSWGVLLNSGIGEG) form a pore-forming region. The segment at residues 601–622 (LSSAMWFSWGVLLNSGIGEGAP) is an intramembrane region (discontinuously helical). Topologically, residues 623–628 (RSFSAR) are cytoplasmic. The helical transmembrane segment at 629–645 (ILGMVWAGFAMIIVASY) threads the bilayer. Residues 646 to 810 (TANLAAFLVL…NAPATLTFEN (165 aa)) lie on the Extracellular side of the membrane. Serine 686 and aspartate 730 together coordinate glycine. Cysteine 742 and cysteine 796 are joined by a disulfide. N-linked (GlcNAc...) asparagine glycosylation is present at asparagine 769. Residues 811-831 (MAGVFMLVAGGIVAGIFLIFI) form a helical membrane-spanning segment. The Cytoplasmic segment spans residues 832–903 (EIAYKRHKDA…SSKDTVNVVV (72 aa)).

This sequence belongs to the glutamate-gated ion channel (TC 1.A.10.1) family. NR1/GRIN1 subfamily. In terms of assembly, heterotetramer; the NMDAR subunits are modular and harbor tiered domains that function in concert to regulate opening and closing of the cation-selective ion channel pore. Forms heterotetrameric channels composed of two GluN1/zeta subunits (GRIN1), and two identical GluN2/epsilon subunits (GRIN2A, GRIN2B, GRIN2C or GRIN2D) or GluN3 subunits (GRIN3A or GRIN3B) (in vitro). Does not form functional channels by itself. Can also form heterotetrameric channels that contain at least two GluN1 subunits and at least two different GluN2 subunits (or a combination of one GluN2 and one GluN3 subunits) (in vitro). In vivo, the subunit composition may vary in function of the expression levels of the different subunits.

It is found in the cell membrane. The protein localises to the postsynaptic cell membrane. Its subcellular location is the postsynaptic density membrane. The protein resides in the synaptic cell membrane. The enzyme catalyses Ca(2+)(in) = Ca(2+)(out). It carries out the reaction Na(+)(in) = Na(+)(out). The catalysed reaction is K(+)(in) = K(+)(out). Its activity is regulated as follows. NMDA glutamate receptor activity is modulated by zinc ions. The NMDA glutamate receptor activity of the heterotetramer with grin2b is stimulated by micromolar levels of Zn(2+). The NMDA glutamate receptor activity of the heterotetramer with grin2a is inhibited by nanomolar levels of Zn(2+). Functionally, component of N-methyl-D-aspartate (NMDA) receptors (NMDARs) that function as heterotetrameric, ligand-gated cation channels with high calcium permeability and voltage-dependent block by Mg(2+). NMDARs participate in synaptic plasticity. Channel activation requires binding of the neurotransmitter L-glutamate to the GluN2 subunit, glycine binding to the GluN1 subunit, plus membrane depolarization to eliminate channel inhibition by Mg(2+). NMDARs mediate simultaneously the potasium efflux and the influx of calcium and sodium. Each GluN2 or GluN3 subunit confers differential attributes to channel properties, including activation, deactivation and desensitization kinetics, pH sensitivity, Ca2(+) permeability, and binding to allosteric modulators. In Xenopus laevis (African clawed frog), this protein is Glutamate receptor ionotropic, NMDA 1.